We begin with the raw amino-acid sequence, 653 residues long: Zinc finger protein 59 (653 aa).

One can recognise a KRAB domain in the interval Val-14–Pro-86. C2H2-type zinc fingers lie at residues Tyr-172–His-194, Tyr-200–His-222, Phe-256–His-278, Tyr-284–His-306, Phe-312–His-334, Phe-340–His-362, Phe-368–His-390, Leu-396–His-418, Phe-424–His-446, Tyr-452–His-474, Phe-480–His-502, Phe-508–His-530, Phe-536–His-558, Tyr-564–His-586, Phe-592–His-614, and Phe-620–His-642.

Belongs to the krueppel C2H2-type zinc-finger protein family. In terms of tissue distribution, expressed predominantly in the testis (at protein level).

The protein localises to the nucleus. Functionally, may have a role during differentiation processes. The sequence is that of Zinc finger protein 59 (Zfp59) from Mus musculus (Mouse).